The sequence spans 300 residues: 2-methylisocitrate lyase (300 aa).

53-55 (SGD) serves as a coordination point for substrate. D92 and D94 together coordinate Mg(2+). Substrate contacts are provided by residues 129–130 (CG), R162, E192, 214–216 (NMT), R245, and R274.

Belongs to the isocitrate lyase/PEP mutase superfamily. Methylisocitrate lyase family. Requires Mg(2+) as cofactor.

The enzyme catalyses 3-hydroxybutane-1,2,3-tricarboxylate = pyruvate + succinate. Involved in the methylcitric acid cycle. Catalyzes the cleavage of 2-methylisocitrate to yield pyruvate and succinate. The chain is 2-methylisocitrate lyase from Halalkalibacterium halodurans (strain ATCC BAA-125 / DSM 18197 / FERM 7344 / JCM 9153 / C-125) (Bacillus halodurans).